Here is a 180-residue protein sequence, read N- to C-terminus: Protein SPMIP9 (180 aa).

Microtubule inner protein component of sperm flagellar doublet microtubules. Only detected after the mouse is 35 days old. Expression increases gradually from day 35 to 6 months, and remains stable after 54 days. Exclusively expressed in the epididymis and testis.

It localises to the nucleus. The protein resides in the cytoplasm. It is found in the cytoskeleton. The protein localises to the flagellum axoneme. In terms of biological role, microtubule inner protein (MIP) part of the dynein-decorated doublet microtubules (DMTs) in flagella axoneme. This is Protein SPMIP9 (Spmip9) from Mus musculus (Mouse).